We begin with the raw amino-acid sequence, 791 residues long: Vezatin (791 aa).

2 helical membrane-spanning segments follow: residues 138 to 158 (IATP…ALAA) and 163 to 183 (SISS…FTVL). A coiled-coil region spans residues 435 to 464 (VRSLQLHLKALLNEVIILEDELEKLSSCKE). Positions 752 to 769 (GDEWDDDDDDNDNDDDNY) are enriched in acidic residues. Positions 752–791 (GDEWDDDDDDNDNDDDNYDQVKNVESHEKERNNVSLQLEE) are disordered. Residues 773–783 (KNVESHEKERN) are compositionally biased toward basic and acidic residues.

It belongs to the vezatin family. As to quaternary structure, interacts with myosin VIIa and the cadherin-catenins complex.

It localises to the cell membrane. It is found in the cell junction. The protein localises to the adherens junction. Its subcellular location is the nucleus. Functionally, plays a pivotal role in the establishment of adherens junctions and their maintenance in adult life. In Xenopus tropicalis (Western clawed frog), this protein is Vezatin (vezt).